We begin with the raw amino-acid sequence, 138 residues long: MIQQTLCLIKPDATQRNLIGKILSHLEEAGLTIKALKKVQLNQEQAEGFYAEHQGKEFFAPLVEFMISAPIVAVVLEGENAISHYRELMGATNPEQRKAGTIRALYAISGRENSVHGSDSEQSAKREIAYFFTPNEIL.

ATP contacts are provided by Lys-10, Phe-58, Arg-86, Thr-92, Arg-103, and Asn-113. The Pros-phosphohistidine intermediate role is filled by His-116.

Belongs to the NDK family. Homotetramer. It depends on Mg(2+) as a cofactor.

Its subcellular location is the cytoplasm. It catalyses the reaction a 2'-deoxyribonucleoside 5'-diphosphate + ATP = a 2'-deoxyribonucleoside 5'-triphosphate + ADP. The catalysed reaction is a ribonucleoside 5'-diphosphate + ATP = a ribonucleoside 5'-triphosphate + ADP. Its function is as follows. Major role in the synthesis of nucleoside triphosphates other than ATP. The ATP gamma phosphate is transferred to the NDP beta phosphate via a ping-pong mechanism, using a phosphorylated active-site intermediate. In Actinobacillus pleuropneumoniae serotype 7 (strain AP76), this protein is Nucleoside diphosphate kinase.